The following is a 596-amino-acid chain: Chitooligosaccharidolytic beta-N-acetylglucosaminidase (596 aa).

An N-terminal signal peptide occupies residues 1 to 23 (MWLQAICIYTVFIIIGCGIPTAA). N-linked (GlcNAc...) asparagine glycans are attached at residues Asn166, Asn264, and Asn377.

Belongs to the glycosyl hydrolase 20 family.

It carries out the reaction Hydrolysis of terminal non-reducing N-acetyl-D-hexosamine residues in N-acetyl-beta-D-hexosaminides.. Active during metamorphosis to degrade chitin. This Bombyx mori (Silk moth) protein is Chitooligosaccharidolytic beta-N-acetylglucosaminidase.